A 271-amino-acid chain; its full sequence is RELT-like protein 1 (271 aa).

A signal peptide spans 1 to 23; it reads MAPRALPGSAVLAAAVFVGGAVS. At 24–57 the chain is on the extracellular side; it reads SPLVAPDNGSSRTLHSRTETTPSPSNDTGNGHPE. The interval 28-53 is disordered; sequence APDNGSSRTLHSRTETTPSPSNDTGN. 2 N-linked (GlcNAc...) asparagine glycosylation sites follow: asparagine 31 and asparagine 49. The segment covering 31-52 has biased composition (polar residues); the sequence is NGSSRTLHSRTETTPSPSNDTG. A helical membrane pass occupies residues 58–78; it reads YIAYALVPVFFIMGLFGVLIC. At 79-271 the chain is on the cytoplasmic side; that stretch reads HLLKKKGYRC…PVKRERSGTE (193 aa). Residues 89–113 adopt a coiled-coil conformation; that stretch reads TTEAEQDIEEEKVEKIELNDSVNEN. Residues serine 109 and serine 114 each carry the phosphoserine modification. 2 disordered regions span residues 145-173 and 233-271; these read DPES…TPGK and VEHK…SGTE. The span at 155-165 shows a compositional bias: pro residues; that stretch reads PGSPPVSPGPL. The span at 233–244 shows a compositional bias: basic and acidic residues; that stretch reads VEHKSNQKERRS. A phosphoserine mark is found at serine 244 and serine 247.

It belongs to the RELT family. Interacts with RELT, RELL2 and OXSR1. Interacts with PLSCR1. In terms of processing, phosphorylated in vitro by OXSR1. Widely expressed. Expressed at highest levels in the placenta, skeletal muscle, spleen and testis.

It localises to the cell membrane. Its function is as follows. Induces activation of MAPK14/p38 cascade, when overexpressed. Induces apoptosis, when overexpressed. The chain is RELT-like protein 1 (RELL1) from Homo sapiens (Human).